Reading from the N-terminus, the 523-residue chain is Frizzled-4 (523 aa).

Positions 1-22 are cleaved as a signal peptide; the sequence is MGARSLTLLYLLCCLVVGLIAG. The Extracellular portion of the chain corresponds to 23–198; that stretch reads FGEEEERSCD…KCGYDSGLYN (176 aa). An FZ domain is found at 26-147; that stretch reads EEERSCDPIR…NDHNHMCMEG (122 aa). Intrachain disulfides connect Cys31–Cys92, Cys39–Cys85, Cys76–Cys114, Cys103–Cys144, Cys107–Cys131, Cys167–Cys186, Cys190–Cys268, and Cys288–Cys363. Asn45 carries N-linked (GlcNAc...) asparagine glycosylation. The N-linked (GlcNAc...) asparagine glycan is linked to Asn130. Residues 199 to 229 traverse the membrane as a helical segment; the sequence is RLSKEFTDIWMAVWASLCFISTAFTVLTFLI. At 230-235 the chain is on the cytoplasmic side; it reads DSSRFC. Residues 236–261 form a helical membrane-spanning segment; the sequence is YPERPIIFLSMCYNIYSIAYIVRLTV. Topologically, residues 262-285 are extracellular; sequence GRERISCDFEEAAEPVLIQEGLKN. The chain crosses the membrane as a helical span at residues 286–319; that stretch reads TGCAIIFLLMYFFGMASSIWWVILTLTWFLAAGL. Over 320 to 322 the chain is Cytoplasmic; the sequence is KWG. Residues 323 to 351 form a helical membrane-spanning segment; the sequence is HEAIEMHSSYFHIAAWAIPAVKTIVILIM. The Extracellular segment spans residues 352 to 369; the sequence is RLVDADELTGLCYVGNQN. Residues 370–396 traverse the membrane as a helical segment; it reads IDALTGFVVAPLFTYLVIGTLFIAAGL. The Cytoplasmic segment spans residues 397–417; that stretch reads VALFKIRSNLQKDGTKTDKLE. A helical transmembrane segment spans residues 418–443; that stretch reads RLMVKIGVFSVLYTVPATCVIACYFY. Residues 444 to 459 are Extracellular-facing; the sequence is EVSNWNVFRYTADDSN. The chain crosses the membrane as a helical span at residues 460–481; sequence MAVEMLNIFMSLLVGITSGMWI. The Cytoplasmic segment spans residues 482 to 523; that stretch reads WSAKTLHTWQKCTNRLVNSGKVKRKKRVDGWVKPGKGNETVV. The short motif at 485 to 490 is the Lys-Thr-X-X-X-Trp motif, mediates interaction with the PDZ domain of Dvl family members element; sequence KTLHTW. Residues 521–523 carry the PDZ-binding motif; it reads TVV.

This sequence belongs to the G-protein coupled receptor Fz/Smo family. In terms of assembly, interacts (via FZ domain) with tsku; tsku competes with wnt2b for binding to fzd4, inhibiting Wnt signaling and repressing peripheral eye development.

The protein resides in the cell membrane. Its function is as follows. Receptor for Wnt proteins. Most frizzled receptors are coupled to the beta-catenin canonical signaling pathway, which leads to the activation of disheveled proteins, inhibition of GSK-3 kinase, nuclear accumulation of beta-catenin and activation of Wnt target genes. A second signaling pathway involving PKC and calcium fluxes has been seen for some family members, but it is not yet clear if it represents a distinct pathway or if it can be integrated in the canonical pathway, as PKC seems to be required for Wnt-mediated inactivation of GSK-3 kinase. Both pathways seem to involve interactions with G-proteins. May be involved in transduction and intercellular transmission of polarity information during tissue morphogenesis and/or in differentiated tissues. Activated by Wnt5A. The protein is Frizzled-4 (fzd4) of Xenopus laevis (African clawed frog).